Consider the following 336-residue polypeptide: MERKISRIHLVSEPSITHFLQVSWEKTLESGFVITLTDGHSAWTGTVSESEISQEADDMAMEKGKYVGELRKALLSGAGPADVYTFNFSKESCYFFFEKNLKDVSFRLGSFNLEKVENPAEVIRELICYCLDTIAENQAKNEHLQKENERLLRDWNDVQGRFEKCVSAKEALETDLYKRFILVLNEKKTKIRSLHNKLLNAAQEREKDIKQEGETAICSEMTADRDPVYDESTDEESENQTDLSGLASAAVSKDDSIISSLDVTDIAPSRKRRQRMQRNLGTEPKMAPQENQLQEKENSRPDSSLPETSKKEHISAENMSLETLRNSSPEDLFDEI.

An interaction with IFFO1 region spans residues 1 to 213; it reads MERKISRIHL…EREKDIKQEG (213 aa). Ser53 carries the phosphoserine; by PRKDC modification. Coiled-coil stretches lie at residues 131–165 and 184–212; these read LDTIAENQAKNEHLQKENERLLRDWNDVQGRFEKC and LNEKKTKIRSLHNKLLNAAQEREKDIKQE. Residues 180 to 213 are interaction with LIG4; that stretch reads FILVLNEKKTKIRSLHNKLLNAAQEREKDIKQEG. At Ser193 the chain carries Phosphoserine; by PRKDC. Lys210 is covalently cross-linked (Glycyl lysine isopeptide (Lys-Gly) (interchain with G-Cter in SUMO)). Positions 212-249 are disordered; sequence EGETAICSEMTADRDPVYDESTDEESENQTDLSGLASA. At Tyr229 the chain carries Phosphotyrosine. Residues 229–239 are compositionally biased toward acidic residues; that stretch reads YDESTDEESEN. Phosphoserine is present on Ser232. A Phosphothreonine; by CK2 modification is found at Thr233. Phosphoserine occurs at positions 237 and 256. Residue Ser260 is modified to Phosphoserine; by PRKDC. The disordered stretch occupies residues 264–336; it reads TDIAPSRKRR…SSPEDLFDEI (73 aa). A Nuclear localization signal motif is present at residues 270–275; the sequence is RKRRQR. A Glycyl lysine isopeptide (Lys-Gly) (interchain with G-Cter in ubiquitin) cross-link involves residue Lys296. Residues Ser303, Ser304, Ser315, and Ser320 each carry the phosphoserine; by PRKDC modification. Residues 317-329 are compositionally biased toward polar residues; that stretch reads ENMSLETLRNSSP. The residue at position 323 (Thr323) is a Phosphothreonine; by PRKDC. Phosphoserine; by PRKDC is present on residues Ser327 and Ser328.

Belongs to the XRCC4-XLF family. XRCC4 subfamily. Homodimer and homotetramer in solution. Interacts with NHEJ1/XLF; the interaction is direct and is mediated via a head-to-head interaction between N-terminal head regions. Interacts with LIG4; the LIG4-XRCC4 subcomplex has a 1:2 stoichiometry and XRCC4 is required for LIG4 stability. Component of the core long-range non-homologous end joining (NHEJ) complex (also named DNA-PK complex) composed of PRKDC, LIG4, XRCC4, XRCC6/Ku70, XRCC5/Ku86 and NHEJ1/XLF. Additional component of the NHEJ complex includes PAXX. Following autophosphorylation, PRKDC dissociates from DNA, leading to formation of the short-range NHEJ complex, composed of LIG4, XRCC4, XRCC6/Ku70, XRCC5/Ku86 and NHEJ1/XLF. Interacts with PRKDC; the interaction is direct. Interacts with XRCC6/Ku70; the interaction is direct. Interacts with APTX and APLF. Forms a heterotetramer with IFFO1; the interaction involves LIG4-free XRCC4 and leads to the relocalization of IFFO1 to the sites of DNA damage. Interacts with PNKP; mainly interacts with PNKP when phosphorylated at Thr-233, but is also able to interact at much lower level with PNKP when not unphosphorylated. Interacts with POLL (DNA polymerase lambda). As to quaternary structure, interacts with XKR4; interacts with the processed form of XKR4, which is cleaved by caspase. Phosphorylated by PRKDC at the C-terminus in response to DNA damage; Ser-260 and Ser-320 constitute the main phosphorylation sites. Phosphorylations by PRKDC at the C-terminus of XRCC4 and NHEJ1/XLF are highly redundant and regulate ability of the XRCC4-NHEJ1/XLF subcomplex to bridge DNA. Phosphorylation by PRKDC does not prevent interaction with NHEJ1/XLF but disrupts ability to bridge DNA and promotes detachment from DNA. Phosphorylation at Ser-327 and Ser-328 by PRKDC promotes recognition by the SCF(FBXW7) complex and subsequent ubiquitination via 'Lys-63'-linked ubiquitin. Phosphorylation at Thr-233 by CK2 promotes interaction with PNKP; regulating PNKP activity and localization to DNA damage sites. Phosphorylation by CK2 promotes interaction with APTX. Post-translationally, ubiquitinated at Lys-296 by the SCF(FBXW7) complex via 'Lys-63'-linked ubiquitination, thereby promoting double-strand break repair: the SCF(FBXW7) complex specifically recognizes XRCC4 when phosphorylated at Ser-327 and Ser-328 by PRKDC, and 'Lys-63'-linked ubiquitination facilitates DNA non-homologous end joining (NHEJ) by enhancing association with XRCC5/Ku80 and XRCC6/Ku70. Monoubiquitinated. In terms of processing, undergoes proteolytic processing by caspase-3 (CASP3). This generates the protein XRCC4, C-terminus (XRCC4/C), which translocates to the cytoplasm and activates phospholipid scramblase activity of XKR4, thereby promoting phosphatidylserine exposure on apoptotic cell surface. Widely expressed.

The protein localises to the nucleus. It localises to the chromosome. Its subcellular location is the cytoplasm. DNA non-homologous end joining (NHEJ) core factor, required for double-strand break repair and V(D)J recombination. Acts as a scaffold protein that regulates recruitment of other proteins to DNA double-strand breaks (DSBs). Associates with NHEJ1/XLF to form alternating helical filaments that bridge DNA and act like a bandage, holding together the broken DNA until it is repaired. The XRCC4-NHEJ1/XLF subcomplex binds to the DNA fragments of a DSB in a highly diffusive manner and robustly bridges two independent DNA molecules, holding the broken DNA fragments in close proximity to one other. The mobility of the bridges ensures that the ends remain accessible for further processing by other repair factors. Plays a key role in the NHEJ ligation step of the broken DNA during DSB repair via direct interaction with DNA ligase IV (LIG4): the LIG4-XRCC4 subcomplex reseals the DNA breaks after the gap filling is completed. XRCC4 stabilizes LIG4, regulates its subcellular localization and enhances LIG4's joining activity. Binding of the LIG4-XRCC4 subcomplex to DNA ends is dependent on the assembly of the DNA-dependent protein kinase complex DNA-PK to these DNA ends. Promotes displacement of PNKP from processed strand break termini. Functionally, acts as an activator of the phospholipid scramblase activity of XKR4. This form, which is generated upon caspase-3 (CASP3) cleavage, translocates into the cytoplasm and interacts with XKR4, thereby promoting phosphatidylserine scramblase activity of XKR4 and leading to phosphatidylserine exposure on apoptotic cell surface. In Homo sapiens (Human), this protein is DNA repair protein XRCC4.